A 777-amino-acid polypeptide reads, in one-letter code: Hepatocyte growth factor-regulated tyrosine kinase substrate (777 aa).

The VHS domain maps to 15-143 (ATSQLLLETD…IMKVEGHVFP (129 aa)). An FYVE-type zinc finger spans residues 160-220 (WVDAEECHRC…VCEPCYEQLN (61 aa)). The Zn(2+) site is built by Cys-166, Cys-169, Cys-182, Cys-185, Cys-190, and Cys-193. Residue Lys-207 is modified to N6-acetyllysine. Residues Cys-212 and Cys-215 each contribute to the Zn(2+) site. At Tyr-216 the chain carries Phosphotyrosine. The interval 223–319 (AEGKATSTTE…SPVNSSAPLA (97 aa)) is disordered. Residues 225–543 (GKATSTTELP…QRLQEQEKER (319 aa)) are interaction with SNX1. Residues 258 to 277 (QEEEELQLALALSQSEAEEK) form the UIM domain. A compositionally biased stretch (low complexity) spans 290–311 (PKAEPMPSASSAPPASSLYSSP). Phosphotyrosine occurs at positions 308, 329, and 334. The interval 338–407 (KQEEARKSPT…NGESEESHEQ (70 aa)) is disordered. The interaction with SNAP25 and TRAK2 stretch occupies residues 445–543 (SINGMHPQLL…QRLQEQEKER (99 aa)). The tract at residues 454-572 (LELLNQLDER…FPLPYAQLQA (119 aa)) is interaction with STAM. An interaction with NF2 region spans residues 480–777 (ARGALSALRE…GSEAQLISFD (298 aa)). Lys-551 is modified (N6-succinyllysine). The tract at residues 718–777 (LPSQDASLPPQQPYIAGQQPMYQQMAPSGGPPQQQPPVAQQPQAQGPPAQGSEAQLISFD) is disordered. Low complexity predominate over residues 753–768 (PPVAQQPQAQGPPAQG).

In terms of assembly, component of the ESCRT-0 complex composed of STAM or STAM2 and HGS. Part of a complex at least composed of HSG, STAM2 (or probably STAM) and EPS15. Interacts with STAM. Interacts with STAM2. Interacts with EPS15; the interaction is direct, calcium-dependent and inhibited by SNAP25. Identified in a complex with STAM and LITAF. Found in a complex with STAM and E3 ligase ITCH and DTX3L. Interacts with E3 ligase DTX3L; the interaction brings together STAM and HSG, promotes their recruitment to early endosomes and decreases STAM and HGS ubiquitination by ITCH. Interacts with NF2; the interaction is direct. Interacts with ubiquitin; the interaction is direct. Interacts with VPS37C. Interacts with SMAD1, SMAD2 and SMAD3. Interacts with TSG101; the interaction mediates the association with the ESCRT-I complex. Interacts with SNAP25; the interaction is direct and decreases with addition of increasing concentrations of free calcium. Interacts with SNX1; the interaction is direct. Component of a 550 kDa membrane complex at least composed of HGS and SNX1 but excluding EGFR. Interacts with TRAK1. Interacts with TRAK2. Component of the CART complex, at least composed of ACTN4, HGS/HRS, MYO5B and TRIM3. Interacts (via UIM domain) with UBQLN1 (via ubiquitin-like domain). Interacts with ARRDC3. Identified in a complex containing at least ARRDC4, AVPR2 and HGS. Interacts with LAPTM4B; promotes HGS ubiquitination. Phosphorylated on Tyr-334. A minor site of phosphorylation on Tyr-329 is detected. Phosphorylation occurs in response to EGF, IL-2, GM-CSF and HGF. In terms of processing, ubiquitinated. Ubiquitinated by ITCH. Ubiquitous expression in adult and fetal tissues with higher expression in testis and peripheral blood leukocytes.

It localises to the cytoplasm. The protein resides in the early endosome membrane. The protein localises to the endosome. Its subcellular location is the multivesicular body membrane. Its function is as follows. Involved in intracellular signal transduction mediated by cytokines and growth factors. When associated with STAM, it suppresses DNA signaling upon stimulation by IL-2 and GM-CSF. Could be a direct effector of PI3-kinase in vesicular pathway via early endosomes and may regulate trafficking to early and late endosomes by recruiting clathrin. May concentrate ubiquitinated receptors within clathrin-coated regions. Involved in down-regulation of receptor tyrosine kinase via multivesicular body (MVBs) when complexed with STAM (ESCRT-0 complex). The ESCRT-0 complex binds ubiquitin and acts as a sorting machinery that recognizes ubiquitinated receptors and transfers them to further sequential lysosomal sorting/trafficking processes. May contribute to the efficient recruitment of SMADs to the activin receptor complex. Involved in receptor recycling via its association with the CART complex, a multiprotein complex required for efficient transferrin receptor recycling but not for EGFR degradation. The sequence is that of Hepatocyte growth factor-regulated tyrosine kinase substrate (HGS) from Homo sapiens (Human).